Consider the following 97-residue polypeptide: Co-chaperonin GroES (97 aa).

Belongs to the GroES chaperonin family. Heptamer of 7 subunits arranged in a ring. Interacts with the chaperonin GroEL.

The protein localises to the cytoplasm. Functionally, together with the chaperonin GroEL, plays an essential role in assisting protein folding. The GroEL-GroES system forms a nano-cage that allows encapsulation of the non-native substrate proteins and provides a physical environment optimized to promote and accelerate protein folding. GroES binds to the apical surface of the GroEL ring, thereby capping the opening of the GroEL channel. The polypeptide is Co-chaperonin GroES (Aeromonas salmonicida).